The following is a 374-amino-acid chain: RNA binding protein fox-1 homolog 3 (374 aa).

Over residues 1 to 29 (MAQPYPPAQYPPPPQNGIPAEYAPPPPHP) the composition is skewed to pro residues. The interval 1-105 (MAQPYPPAQY…QQPKRLHVSN (105 aa)) is disordered. Over residues 49–74 (TPAQTHPEQPGTEASTQPIAGTQTVP) the composition is skewed to polar residues. The RRM domain maps to 99–175 (KRLHVSNIPF…RKIEVNNATA (77 aa)). Asymmetric dimethylarginine; alternate is present on arginine 223. Arginine 223 carries the omega-N-methylarginine; alternate modification. Arginine 319 is subject to Asymmetric dimethylarginine.

In terms of processing, phosphorylated. As to expression, widely expressed in brain, including in cerebral cortex, hippocampus, thalamus, caudate/putamen, cerebellum, as well as in the spinal cord (at protein level). Not expressed in all neuronal cells within a region, in cerebellum, expression is absent in Purkinje cells (at protein level). Expressed in the retina in the ganglion cells and some cells in the inner nuclear layer, but absent from the photoreceptor cells and most cells in the inner nuclear layer (at protein level).

It localises to the nucleus. The protein resides in the cytoplasm. Functionally, pre-mRNA alternative splicing regulator. Regulates alternative splicing of RBFOX2 to enhance the production of mRNA species that are targeted for nonsense-mediated decay (NMD). The protein is RNA binding protein fox-1 homolog 3 (Rbfox3) of Mus musculus (Mouse).